The primary structure comprises 477 residues: Phosphomethylpyrimidine synthase (477 aa).

Substrate-binding positions include Asn-67, Met-96, Tyr-125, His-160, 180-182 (SRG), 221-224 (DGLR), and Glu-260. Position 264 (His-264) interacts with Zn(2+). Residue Tyr-287 coordinates substrate. Zn(2+) is bound at residue His-328. 3 residues coordinate [4Fe-4S] cluster: Cys-408, Cys-411, and Cys-416. Basic and acidic residues predominate over residues 427–440 (AGDGMDGLESRTDL). The disordered stretch occupies residues 427 to 477 (AGDGMDGLESRTDLDSSAAAAVNRPPTGVHRAEKLDDIPCPVAEDDVAADD).

Belongs to the ThiC family. The cofactor is [4Fe-4S] cluster.

It catalyses the reaction 5-amino-1-(5-phospho-beta-D-ribosyl)imidazole + S-adenosyl-L-methionine = 4-amino-2-methyl-5-(phosphooxymethyl)pyrimidine + CO + 5'-deoxyadenosine + formate + L-methionine + 3 H(+). Its pathway is cofactor biosynthesis; thiamine diphosphate biosynthesis. In terms of biological role, catalyzes the synthesis of the hydroxymethylpyrimidine phosphate (HMP-P) moiety of thiamine from aminoimidazole ribotide (AIR) in a radical S-adenosyl-L-methionine (SAM)-dependent reaction. The sequence is that of Phosphomethylpyrimidine synthase from Natronomonas pharaonis (strain ATCC 35678 / DSM 2160 / CIP 103997 / JCM 8858 / NBRC 14720 / NCIMB 2260 / Gabara) (Halobacterium pharaonis).